The sequence spans 239 residues: UPF0641 membrane protein YHR140W (239 aa).

Topologically, residues 1 to 11 are cytoplasmic; that stretch reads MMSCLVPTRFT. A helical membrane pass occupies residues 12 to 31; the sequence is LTLNTACLLTSTWGFVRATS. At 32-45 the chain is on the lumenal side; it reads VVLPPSLSKAGHKQ. A helical membrane pass occupies residues 46–66; sequence FLTIISIIATIINNAVNISNY. Residues 67-99 are Cytoplasmic-facing; the sequence is YIQRNNKMNLETKKKSDFISRHVTLPVSLVLES. A helical transmembrane segment spans residues 100 to 120; that stretch reads IVATVYWPLRLFFVNLIMHGV. The Lumenal segment spans residues 121-125; sequence ESTAK. The helical transmembrane segment at 126 to 146 threads the bilayer; that stretch reads TPFPMTVDMAIHLYPILYLLA. Residues 147 to 162 lie on the Cytoplasmic side of the membrane; that stretch reads DHYLSGSGTKFKLSNK. The helical transmembrane segment at 163–183 threads the bilayer; the sequence is HAWLIVTSLAFSYFQYLAFLI. The Lumenal portion of the chain corresponds to 184 to 204; sequence DAGQGQAYPYPFLDVNEPYKS. The helical transmembrane segment at 205–225 threads the bilayer; sequence IIFVVVATITWAYYVFYQKFP. Residues 226–239 are Cytoplasmic-facing; it reads PKYIKKSAKKGDKN.

The protein belongs to the UPF0641 family.

The protein localises to the endoplasmic reticulum membrane. This is UPF0641 membrane protein YHR140W from Saccharomyces cerevisiae (strain ATCC 204508 / S288c) (Baker's yeast).